The chain runs to 730 residues: Phosphoribosylformylglycinamidine synthase subunit PurL (730 aa).

The active site involves H44. Positions 47 and 86 each coordinate ATP. E88 lines the Mg(2+) pocket. Substrate contacts are provided by residues 89-92 (SHNH) and R111. H90 serves as the catalytic Proton acceptor. Mg(2+) is bound at residue D112. Residue Q235 coordinates substrate. Mg(2+) is bound at residue D263. Position 307–309 (307–309 (ESQ)) interacts with substrate. ATP contacts are provided by N489 and G526. A Mg(2+)-binding site is contributed by N527. S529 lines the substrate pocket.

Belongs to the FGAMS family. As to quaternary structure, monomer. Part of the FGAM synthase complex composed of 1 PurL, 1 PurQ and 2 PurS subunits.

It localises to the cytoplasm. The enzyme catalyses N(2)-formyl-N(1)-(5-phospho-beta-D-ribosyl)glycinamide + L-glutamine + ATP + H2O = 2-formamido-N(1)-(5-O-phospho-beta-D-ribosyl)acetamidine + L-glutamate + ADP + phosphate + H(+). Its pathway is purine metabolism; IMP biosynthesis via de novo pathway; 5-amino-1-(5-phospho-D-ribosyl)imidazole from N(2)-formyl-N(1)-(5-phospho-D-ribosyl)glycinamide: step 1/2. In terms of biological role, part of the phosphoribosylformylglycinamidine synthase complex involved in the purines biosynthetic pathway. Catalyzes the ATP-dependent conversion of formylglycinamide ribonucleotide (FGAR) and glutamine to yield formylglycinamidine ribonucleotide (FGAM) and glutamate. The FGAM synthase complex is composed of three subunits. PurQ produces an ammonia molecule by converting glutamine to glutamate. PurL transfers the ammonia molecule to FGAR to form FGAM in an ATP-dependent manner. PurS interacts with PurQ and PurL and is thought to assist in the transfer of the ammonia molecule from PurQ to PurL. The polypeptide is Phosphoribosylformylglycinamidine synthase subunit PurL (Pelagibacter ubique (strain HTCC1062)).